Consider the following 686-residue polypeptide: tRNA 5-methylaminomethyl-2-thiouridine biosynthesis bifunctional protein MnmC (686 aa).

Residues 1–258 (MPNIPLRVNS…RRALRRQQLD (258 aa)) are tRNA (mnm(5)s(2)U34)-methyltransferase. The tract at residues 276-686 (IGGGVASANL…MRKLIKGKAL (411 aa)) is FAD-dependent cmnm(5)s(2)U34 oxidoreductase.

It in the N-terminal section; belongs to the methyltransferase superfamily. tRNA (mnm(5)s(2)U34)-methyltransferase family. In the C-terminal section; belongs to the DAO family. FAD is required as a cofactor.

It is found in the cytoplasm. It carries out the reaction 5-aminomethyl-2-thiouridine(34) in tRNA + S-adenosyl-L-methionine = 5-methylaminomethyl-2-thiouridine(34) in tRNA + S-adenosyl-L-homocysteine + H(+). Functionally, catalyzes the last two steps in the biosynthesis of 5-methylaminomethyl-2-thiouridine (mnm(5)s(2)U) at the wobble position (U34) in tRNA. Catalyzes the FAD-dependent demodification of cmnm(5)s(2)U34 to nm(5)s(2)U34, followed by the transfer of a methyl group from S-adenosyl-L-methionine to nm(5)s(2)U34, to form mnm(5)s(2)U34. This chain is tRNA 5-methylaminomethyl-2-thiouridine biosynthesis bifunctional protein MnmC, found in Shewanella loihica (strain ATCC BAA-1088 / PV-4).